Here is a 247-residue protein sequence, read N- to C-terminus: MWVGVISLFPEMFRSVTDFGVTGQAVKKGLLSIETWNPRDFTHDKHRTVDDRPYGGGPGMLMMVQPLRDAIHTAKAASPGKTKVIYLSPQGRKLDQKGVEELATNENLLLICGRYEGVDERIIQSEVDEEWSIGDFVMTGGEIPAMTLIDSVSRFVPGVLGDFASAEEDSFANGLLDCPHYTRPEVLDDKEVPAVLMSGNHKDIRQWRLKQSLGRTWLRRPELLENLALTDEQEQLLAEFISEHNAK.

S-adenosyl-L-methionine-binding positions include Gly-113 and 133–138 (IGDFVM).

The protein belongs to the RNA methyltransferase TrmD family. As to quaternary structure, homodimer.

The protein resides in the cytoplasm. It carries out the reaction guanosine(37) in tRNA + S-adenosyl-L-methionine = N(1)-methylguanosine(37) in tRNA + S-adenosyl-L-homocysteine + H(+). Functionally, specifically methylates guanosine-37 in various tRNAs. The protein is tRNA (guanine-N(1)-)-methyltransferase of Vibrio campbellii (strain ATCC BAA-1116).